We begin with the raw amino-acid sequence, 368 residues long: Probable deoxyhypusine synthase (368 aa).

Residues 100-104, 126-128, Glu-132, and Asp-233 contribute to the NAD(+) site; these read SNLVS and TAG. 131-132 is a spermidine binding site; that stretch reads EE. Asp-238 contributes to the spermidine binding site. Gly-278 serves as a coordination point for NAD(+). His-283 contacts spermidine. Residue 303–304 participates in NAD(+) binding; it reads TA. Spermidine-binding positions include 309-311 and 318-324; these read GSD and EAISWGK. Catalysis depends on Lys-324, which acts as the Nucleophile. NAD(+) is bound at residue 337 to 338; sequence EA.

Belongs to the deoxyhypusine synthase family. Requires NAD(+) as cofactor.

It catalyses the reaction [eIF5A protein]-L-lysine + spermidine = [eIF5A protein]-deoxyhypusine + propane-1,3-diamine. The protein operates within protein modification; eIF5A hypusination. Functionally, catalyzes the NAD-dependent oxidative cleavage of spermidine and the subsequent transfer of the butylamine moiety of spermidine to the epsilon-amino group of a specific lysine residue of the eIF-5A precursor protein to form the intermediate deoxyhypusine residue. The sequence is that of Probable deoxyhypusine synthase from Drosophila melanogaster (Fruit fly).